Here is a 432-residue protein sequence, read N- to C-terminus: Glutamyl-tRNA reductase (432 aa).

Substrate is bound by residues 49 to 52 (TCNR), S109, 114 to 116 (EGQ), and Q120. C50 functions as the Nucleophile in the catalytic mechanism. 198-203 (GAGRMS) is an NADP(+) binding site.

This sequence belongs to the glutamyl-tRNA reductase family. Homodimer.

The catalysed reaction is (S)-4-amino-5-oxopentanoate + tRNA(Glu) + NADP(+) = L-glutamyl-tRNA(Glu) + NADPH + H(+). Its pathway is porphyrin-containing compound metabolism; protoporphyrin-IX biosynthesis; 5-aminolevulinate from L-glutamyl-tRNA(Glu): step 1/2. It participates in porphyrin-containing compound metabolism; chlorophyll biosynthesis. Catalyzes the NADPH-dependent reduction of glutamyl-tRNA(Glu) to glutamate 1-semialdehyde (GSA). The sequence is that of Glutamyl-tRNA reductase from Synechococcus sp. (strain CC9902).